Reading from the N-terminus, the 88-residue chain is Defensin-like protein 98 (88 aa).

Positions 1–29 (MGSLRVSTVVIAVVACLSILLISPTEVDG) are cleaved as a signal peptide. Cystine bridges form between C33–C76, C40–C62, C46–C73, and C50–C75.

Belongs to the DEFL family.

It is found in the secreted. This is Defensin-like protein 98 from Arabidopsis thaliana (Mouse-ear cress).